Reading from the N-terminus, the 373-residue chain is Probable ethanolamine permease EutH (373 aa).

Transmembrane regions (helical) follow at residues 5–25 (EIIIYLMVIFMILGAIDKIIG), 38–58 (IMAMGSLTLAMVGIITLAPVL), 61–81 (ILSPIVVPIYTALGADPAMFA), 111–131 (ILGSMMGPTIVFTIPVALGII), 143–163 (VLSGIITIPIGCLIGGLVAGF), 166–186 (IMIFKNLVPIILVAALIMLGL), 197–217 (FTIFGKGVVIVATIGLVAGAI), 236–256 (IEIVGGIALVLAGAFCLVFVI), 307–327 (VAFAVSAAFVLGDHLGFTAGV), and 331–351 (MIFPMIVGKLVGGVTAVAVGI).

It belongs to the EutH family.

Its subcellular location is the cell membrane. The catalysed reaction is ethanolamine(in) = ethanolamine(out). Probably involved in the diffusion of protonated ethanolamine (EA) into the cell at low pH. At low pH most EA is protonated, and this permease becomes necessary. Contributes to bacterial survival and replication in acidic macrophage vacuoles, but not to bacterial uptake by macrophages. The polypeptide is Probable ethanolamine permease EutH (Listeria monocytogenes serotype 1/2a (strain 10403S)).